The following is a 184-amino-acid chain: Photosystem I assembly protein Ycf4 (184 aa).

Transmembrane regions (helical) follow at residues 24 to 44 and 57 to 77; these read WAFI…SSYI and IIFF…LFIS.

This sequence belongs to the Ycf4 family.

The protein resides in the plastid. It localises to the chloroplast thylakoid membrane. In terms of biological role, seems to be required for the assembly of the photosystem I complex. In Buxus microphylla (Littleleaf boxwood), this protein is Photosystem I assembly protein Ycf4.